Reading from the N-terminus, the 285-residue chain is Involucrin (285 aa).

Disordered stretches follow at residues 1–93 (MSQQ…QEQK), 120–256 (LEQQ…AQVQ), and 266–285 (LPLI…PEHQ). Polar residues predominate over residues 27–39 (IDTQQEQVKQPTS). 3 stretches are compositionally biased toward low complexity: residues 72–87 (EQQC…QKQQ), 120–129 (LEQQQEQQES), and 137–147 (EQCLEQQQEQQ). Composition is skewed to basic and acidic residues over residues 149–165 (SQEK…KEEL), 175–185 (EQCEKHQEAKN), and 200–233 (QQKE…KEEQ). The span at 235 to 248 (LEQQGQQEGQLEQP) shows a compositional bias: low complexity. The span at 272–285 (QHQKQEVHDPPEHQ) shows a compositional bias: basic and acidic residues.

It belongs to the involucrin family. Directly or indirectly cross-linked to cornifelin (CNFN). In terms of processing, substrate of transglutaminase. Specific glutamines or lysines are cross-linked to keratins, desmoplakin and to inter involucrin molecules. In terms of tissue distribution, keratinocytes of epidermis and other stratified squamous epithelia.

Its subcellular location is the cytoplasm. Its function is as follows. Part of the insoluble cornified cell envelope (CE) of stratified squamous epithelia. The sequence is that of Involucrin (IVL) from Canis lupus familiaris (Dog).